The primary structure comprises 644 residues: MFQDNPLLAQLKQQLHSQTPRAEGVVKATEKGFGFLEVDAKKSYFIPPPQMKKVMHGDRIIAVIHSEKERESAEPEELVEPFLTRFVGKVQGKNDRLAIVPDHPLLKDAIPCRAARGLNHEFKEGDWAVAEMRRHPLKGDRSFYAELTQYITFGDDHFVPWWVTLARHNLEKEAPDGVATEMLDEGLVREDLTALDFVTIDSASTEDMDDALFAKALPDDKLQLIVAIADPTAWIAEGSKLDKAAKIRAFTNYLPGFNIPMLPRELSDDLCSLRANEVRPVLACRMTLSADGTIEDNIEFFAATIESKAKLVYDQVSDWLENTGDWQPESEAIAEQVRLLAQICQRRGEWRHNHALVFKDRPDYRFILGEKGEVLDIVAEPRRIANRIVEEAMIAANICAARVLRDKLGFGIYNVHMGFDPANADALAALLKTHGLHVDAEEVLTLDGFCKLRRELDAQPTGFLDSRIRRFQSFAEISTEPGPHFGLGLEAYATWTSPIRKYGDMINHRLLKAVIKGETATRPQDEITVQMAERRRLNRMAERDVGDWLYARFLKDKAGTGTRFAAEIVDISRGGMRVRLVDNGAIAFIPAPFLHAVRDELVCSQENGTVQIKGETVYKVTDVIDVTIAEVRMETRGIIARPVA.

The region spanning 189–516 (REDLTALDFV…NHRLLKAVIK (328 aa)) is the RNB domain. Residues 561-643 (GTRFAAEIVD…ETRGIIARPV (83 aa)) form the S1 motif domain.

This sequence belongs to the RNR ribonuclease family. RNase II subfamily.

The protein resides in the cytoplasm. The catalysed reaction is Exonucleolytic cleavage in the 3'- to 5'-direction to yield nucleoside 5'-phosphates.. Functionally, involved in mRNA degradation. Hydrolyzes single-stranded polyribonucleotides processively in the 3' to 5' direction. This Shigella sonnei (strain Ss046) protein is Exoribonuclease 2.